The sequence spans 458 residues: UDP-N-acetylmuramate--L-alanine ligase (458 aa).

Residue 112-118 (GTHGKTT) participates in ATP binding.

The protein belongs to the MurCDEF family.

The protein resides in the cytoplasm. The enzyme catalyses UDP-N-acetyl-alpha-D-muramate + L-alanine + ATP = UDP-N-acetyl-alpha-D-muramoyl-L-alanine + ADP + phosphate + H(+). The protein operates within cell wall biogenesis; peptidoglycan biosynthesis. Its function is as follows. Cell wall formation. This is UDP-N-acetylmuramate--L-alanine ligase from Geotalea uraniireducens (strain Rf4) (Geobacter uraniireducens).